We begin with the raw amino-acid sequence, 497 residues long: Homeotic protein empty spiracles (497 aa).

Disordered regions lie at residues 34–117 (NDVS…HLSP), 161–262 (SPLQ…MMMP), and 441–497 (NRRT…DASH). Residues 35–50 (DVSTAGGNSTPDLSGP) are compositionally biased toward polar residues. Residues 51–68 (QSPPPGERNVPGSPPQTP) are compositionally biased toward pro residues. The segment covering 96–117 (PHAQQQQQQHLQAPHPHPHLSP) has biased composition (low complexity). The span at 161–176 (SPLQTRLSPETEQPQM) shows a compositional bias: polar residues. 2 stretches are compositionally biased toward low complexity: residues 208–239 (PKSVSPQSSQPSSSPTLLISSPHATPPQQQQQ) and 248–262 (PAMMHPGGAGPMMMP). Positions 391 to 450 (PKRIRTAFSPSQLLKLEHAFESNQYVVGAERKALAQNLNLSETQVKVWFQNRRTKHKRMQ) form a DNA-binding region, homeobox. The span at 470–497 (GDEDDDELIDMEMDECPSDEEHELDASH) shows a compositional bias: acidic residues.

It belongs to the EMX homeobox family.

Its subcellular location is the nucleus. Acts as a homeotic selector gene controlling antennal and mandibular segment identity. In Drosophila melanogaster (Fruit fly), this protein is Homeotic protein empty spiracles (ems).